We begin with the raw amino-acid sequence, 606 residues long: MRFQGFWLCLGLLFISVNAEFMDDSVEMEDFDENSEETDELSSEIKYKTPQPVGEVYFTETFDSGRLAGWVLSKAKKDDIDAEISIYDGRWEIEELKENRIPGDRGLVLKSRAKHHAISAVLAKPFIFADKPLVVQYEVNFQDGIDCGGAYIKLLADTDGLNLENFYDKTSYTIMFGPDKCGEDYKLHFIFRHKHPKTGVFEEKHAKPPDVDLKRFFTDRKTHLYTLVMNPDDTFEVLIDQIVVNKGSLLEDVVPPINPPKEIEDPTDEKPDDWDERAKIPDASAVKPEDWDESEPPQIVDSSAVKPDGWLDNEPEFIPDPNAEKPFDWNEDMDGEWEAPHISNPACRIGCGEWSPPMIDNPKYKGIWRPPMIDNPNYQGIWSPRKIPNPDYFEDNHPFLLTSFRALGLELWSMTSDIYFDNFIICSEKEVADRWAADGWGMKILIENANEPSIFKQLMSATEQRPWLWFIYLLTAALPIALIGSFCWPRKVKKKYEDVAFEKLDICKPQTKGALEQEVKEEKAALEKPVDLEEEKKQSDGEIVEKEEEGEPEEKSEEEIEIIEGQEEGNKSNKSGSEDEMKEADESTGSGDGPIKSVRKRRVRKE.

A signal peptide spans 1 to 19 (MRFQGFWLCLGLLFISVNA). Topologically, residues 20-466 (EFMDDSVEME…QLMSATEQRP (447 aa)) are lumenal. The residue at position 124 (lysine 124) is an N6-acetyllysine. An intrachain disulfide couples cysteine 147 to cysteine 181. A disordered region spans residues 255–308 (PPINPPKEIEDPTDEKPDDWDERAKIPDASAVKPEDWDESEPPQIVDSSAVKPD). A run of 8 repeats spans residues 263 to 276 (IEDP…DWDE), 280 to 293 (IPDA…DWDE), 299 to 312 (IVDS…GWLD), 318 to 331 (IPDP…DWNE), 335 to 348 (GEWE…PACR), 352 to 365 (GEWS…PKYK), 366 to 379 (GIWR…PNYQ), and 380 to 393 (GIWS…PDYF). Acidic residues predominate over residues 265–275 (DPTDEKPDDWD). The interval 313-346 (NEPEFIPDPNAEKPFDWNEDMDGEWEAPHISNPA) is interaction with PPIB. Residues cysteine 347 and cysteine 351 are joined by a disulfide bond. Residues 467–487 (WLWFIYLLTAALPIALIGSFC) traverse the membrane as a helical segment. At 488–606 (WPRKVKKKYE…SVRKRRVRKE (119 aa)) the chain is on the cytoplasmic side. Basic and acidic residues predominate over residues 518–544 (EVKEEKAALEKPVDLEEEKKQSDGEIV). Residues 518–606 (EVKEEKAALE…SVRKRRVRKE (89 aa)) form a disordered region. A compositionally biased stretch (acidic residues) spans 545-567 (EKEEEGEPEEKSEEEIEIIEGQE). Serine 556, serine 572, serine 575, serine 577, serine 587, serine 590, and serine 597 each carry phosphoserine. Positions 568 to 579 (EGNKSNKSGSED) are enriched in basic and acidic residues. Basic residues predominate over residues 597 to 606 (SVRKRRVRKE).

The protein belongs to the calreticulin family. As to quaternary structure, interacts with PPIB and PDILT. Interacts with ADAM2.

The protein localises to the endoplasmic reticulum membrane. Functionally, functions during spermatogenesis as a chaperone for a range of client proteins that are important for sperm adhesion onto the egg zona pellucida and for subsequent penetration of the zona pellucida. Required for normal sperm migration from the uterus into the oviduct. Required for normal male fertility. Binds calcium ions. This Bos taurus (Bovine) protein is Calmegin (CLGN).